A 287-amino-acid chain; its full sequence is rRNA adenine N-6-methyltransferase (287 aa).

Positions 1-13 (MKKKNHKYRGKKL) are enriched in basic residues. The segment at 1–21 (MKKKNHKYRGKKLNRGESPNF) is disordered. His-25, Met-27, Gly-52, Glu-73, Asp-98, and Asn-114 together coordinate S-adenosyl-L-methionine.

The protein belongs to the class I-like SAM-binding methyltransferase superfamily. rRNA adenine N(6)-methyltransferase family. In terms of assembly, homodimer.

Functionally, involved in erythromycin resistance. The sequence is that of rRNA adenine N-6-methyltransferase (ermJ) from Bacillus anthracis.